Here is a 188-residue protein sequence, read N- to C-terminus: Apolipoprotein M (188 aa).

Residues 1–22 (MFHQIWAALLYFYGIILNSIYQ) constitute a signal peptide (not cleaved). 3 disulfide bridges follow: Cys23–Cys167, Cys95–Cys183, and Cys128–Cys157. Asn135 carries N-linked (GlcNAc...) asparagine glycosylation. Residues Glu136 and Arg143 each contribute to the tetradecanoate site.

The protein belongs to the calycin superfamily. Lipocalin family. Highly divergent. Interacts with LRP2; LRP2 mediates APOM renal uptake and subsequent lysosomal degradation.

It is found in the secreted. Probably involved in lipid transport. Can bind sphingosine-1-phosphate, myristic acid, palmitic acid and stearic acid, retinol, all-trans-retinoic acid and 9-cis-retinoic acid. In Pongo abelii (Sumatran orangutan), this protein is Apolipoprotein M (APOM).